The following is a 190-amino-acid chain: Imidazoleglycerol-phosphate dehydratase (190 aa).

This sequence belongs to the imidazoleglycerol-phosphate dehydratase family.

It localises to the cytoplasm. It carries out the reaction D-erythro-1-(imidazol-4-yl)glycerol 3-phosphate = 3-(imidazol-4-yl)-2-oxopropyl phosphate + H2O. It participates in amino-acid biosynthesis; L-histidine biosynthesis; L-histidine from 5-phospho-alpha-D-ribose 1-diphosphate: step 6/9. The sequence is that of Imidazoleglycerol-phosphate dehydratase from Aliarcobacter butzleri (strain RM4018) (Arcobacter butzleri).